The following is a 569-amino-acid chain: Archaeosine synthase (569 aa).

In terms of domain architecture, PUA spans 495-569 (SGGKDINYIE…ALVNIRNVKS (75 aa)).

It belongs to the archaeosine synthase type 1 family. In terms of assembly, homodimer.

The catalysed reaction is 7-cyano-7-carbaguanosine(15) in tRNA + L-glutamine + H2O = archaeosine(15) in tRNA + L-glutamate. Its pathway is tRNA modification; archaeosine-tRNA biosynthesis. Its function is as follows. Is responsible for the final step in the biosynthesis of archaeosine, a modified nucleoside present in the dihydrouridine loop (D-loop) of archaeal tRNA. Catalyzes the conversion of 7-cyano-7-deazaguanine (preQ0)-modified tRNA to archaeosine-tRNA, transforming a nitrile group to a formamidine group. Can use either glutamine, asparagine or ammonium as amino donor. This Methanocaldococcus jannaschii (strain ATCC 43067 / DSM 2661 / JAL-1 / JCM 10045 / NBRC 100440) (Methanococcus jannaschii) protein is Archaeosine synthase.